A 1399-amino-acid chain; its full sequence is DNA-directed RNA polymerase subunit beta' (1399 aa).

Cys70, Cys72, Cys85, and Cys88 together coordinate Zn(2+). Mg(2+)-binding residues include Asp460, Asp462, and Asp464. Positions 814, 888, 895, and 898 each coordinate Zn(2+).

It belongs to the RNA polymerase beta' chain family. In terms of assembly, the RNAP catalytic core consists of 2 alpha, 1 beta, 1 beta' and 1 omega subunit. When a sigma factor is associated with the core the holoenzyme is formed, which can initiate transcription. It depends on Mg(2+) as a cofactor. Zn(2+) is required as a cofactor.

It catalyses the reaction RNA(n) + a ribonucleoside 5'-triphosphate = RNA(n+1) + diphosphate. Its function is as follows. DNA-dependent RNA polymerase catalyzes the transcription of DNA into RNA using the four ribonucleoside triphosphates as substrates. This is DNA-directed RNA polymerase subunit beta' from Pseudomonas syringae pv. syringae (strain B728a).